Here is a 425-residue protein sequence, read N- to C-terminus: Monoacylglycerol lipase ABHD2 (425 aa).

The Cytoplasmic segment spans residues 1–9 (MNAMMETSE). The chain crosses the membrane as a helical; Signal-anchor for type II membrane protein span at residues 10 to 30 (LPAVFDGVKLAAVAAVLYVIV). Residues 31–425 (RCLNLKSPTA…DTELVEADLE (395 aa)) are Extracellular-facing. In terms of domain architecture, AB hydrolase-1 spans 128–382 (MVICPGIANH…HGGHLGFFEG (255 aa)). The N-linked (GlcNAc...) asparagine glycan is linked to Asn136. Ser207 acts as the Nucleophile in catalysis. Residues Asp345 and His376 each act as charge relay system in the active site. Asn410 is a glycosylation site (N-linked (GlcNAc...) asparagine).

It belongs to the AB hydrolase superfamily. AB hydrolase 4 family.

Its subcellular location is the cell membrane. It catalyses the reaction Hydrolyzes glycerol monoesters of long-chain fatty acids.. It carries out the reaction an acetyl ester + H2O = an aliphatic alcohol + acetate + H(+). The enzyme catalyses a triacylglycerol + H2O = a diacylglycerol + a fatty acid + H(+). The catalysed reaction is 2-(5Z,8Z,11Z,14Z-eicosatetraenoyl)-glycerol + H2O = glycerol + (5Z,8Z,11Z,14Z)-eicosatetraenoate + H(+). It catalyses the reaction a butanoate ester + H2O = an aliphatic alcohol + butanoate + H(+). It carries out the reaction hexadecanoate ester + H2O = an aliphatic alcohol + hexadecanoate + H(+). Its activity is regulated as follows. Acylglycerol lipase activity is activated upon binding to progesterone. Its function is as follows. Progesterone-dependent acylglycerol lipase that catalyzes hydrolysis of endocannabinoid arachidonoylglycerol (AG) from cell membrane. Acts as a progesterone receptor: progesterone-binding activates the acylglycerol lipase activity, mediating degradation of 1-arachidonoylglycerol (1AG) and 2-arachidonoylglycerol (2AG) to glycerol and arachidonic acid (AA). Also displays an ester hydrolase activity against acetyl ester, butanoate ester and hexadecanoate ester. Plays a key role in sperm capacitation in response to progesterone by mediating degradation of 2AG, an inhibitor of the sperm calcium channel CatSper, leading to calcium influx via CatSper and sperm activation. May also play a role in smooth muscle cells migration. This is Monoacylglycerol lipase ABHD2 (ABHD2) from Bos taurus (Bovine).